Reading from the N-terminus, the 295-residue chain is Small ribosomal subunit protein uS2 (295 aa).

Residues 260–295 (KQAKKFSKTKNIDEETNTEFEQALNDADENKNSDNA) form a disordered region.

It belongs to the universal ribosomal protein uS2 family.

This is Small ribosomal subunit protein uS2 from Rickettsia felis (strain ATCC VR-1525 / URRWXCal2) (Rickettsia azadi).